The chain runs to 2357 residues: Myosin-I heavy chain (2357 aa).

One can recognise a Myosin motor domain in the interval 13–688 (QPVEDMITLP…QYLKLEELRK (676 aa)). ATP is bound at residue 106-113 (GESGAGKT). An actin-binding region spans residues 579 to 586 (YVRCIKPN). Residues 691-720 (LLKKVTLIQSVWRMYRCKKRYQQIRASAKI) enclose the IQ domain. Residues 787 to 891 (KRDRNARMLE…QDKNINELDD (105 aa)) are a coiled coil. The interval 787-1076 (KRDRNARMLE…PILGAPPPPP (290 aa)) is binding to talin A. Disordered stretches follow at residues 797–852 (IQRE…EEEL) and 974–1112 (ASSF…NPQP). Low complexity-rich tracts occupy residues 1003-1025 (NNNY…SDFS) and 1078-1106 (TSDS…QSTN). The 159-residue stretch at 1155-1313 (YQKSHIKSSL…PSVTELESIK (159 aa)) folds into the MyTH4 1 domain. One can recognise an FERM 1 domain in the interval 1318–1620 (IFVRITATDG…EYSLYLRNNA (303 aa)). Residues 1618–1678 (NNAKYARALK…PVDHVEILLS (61 aa)) form the SH3 domain. Residues 1686–1849 (VHPVATLSPP…PSKRLTVSPA (164 aa)) are disordered. Pro residues predominate over residues 1706-1733 (TPPPPPSISDSMSPPPQVGMLPPPPPPS). Low complexity-rich tracts occupy residues 1734–1746 (VMGS…IPSL) and 1755–1770 (SSNS…SPMM). A compositionally biased stretch (polar residues) spans 1817–1828 (FRSSLRVSMLNT). A MyTH4 2 domain is found at 1894–2051 (FNKDPIKESL…PSATEIQSFR (158 aa)). One can recognise an FERM 2 domain in the interval 2060-2357 (STCKIRFIDQ…ASVYQFYSSQ (298 aa)).

Belongs to the TRAFAC class myosin-kinesin ATPase superfamily. Myosin family. In terms of assembly, monomer. Interacts with talA.

Its subcellular location is the cytoplasm. Its function is as follows. Myosins are actin-based motor molecules with ATPase activity. Involved in the early steps of phagocytosis and adhesion. The sequence is that of Myosin-I heavy chain (myoI) from Dictyostelium discoideum (Social amoeba).